The chain runs to 251 residues: ATP synthase subunit a, chloroplastic (251 aa).

Transmembrane regions (helical) follow at residues 3 to 23 (IVLL…IANV), 38 to 58 (IHGQ…FLSI), 99 to 119 (VPYI…GALI), 138 to 158 (INTT…AGLN), 203 to 223 (LVVA…LIFL), and 224 to 244 (GLFT…SYIG).

This sequence belongs to the ATPase A chain family. As to quaternary structure, F-type ATPases have 2 components, CF(1) - the catalytic core - and CF(0) - the membrane proton channel. CF(1) has five subunits: alpha(3), beta(3), gamma(1), delta(1), epsilon(1). CF(0) has four main subunits: a, b, b' and c.

Its subcellular location is the plastid. The protein localises to the chloroplast thylakoid membrane. In terms of biological role, key component of the proton channel; it plays a direct role in the translocation of protons across the membrane. The polypeptide is ATP synthase subunit a, chloroplastic (Euglena gracilis).